We begin with the raw amino-acid sequence, 261 residues long: Transmembrane protein 106A (261 aa).

The segment at 1–23 (MGKAVSQLTSRKDEDKPILPDNP) is disordered. A helical membrane pass occupies residues 93 to 113 (LFVFLSVAICLLIFSLTIFFL).

The protein belongs to the TMEM106 family. As to expression, expressed in liver, spleen, lung, kidney, lymph nodes and adipose tissue (at protein level). Expressed by macrophages.

The protein resides in the cell membrane. In terms of biological role, activates macrophages and polarizes them into M1-like macrophages through the activation of the MAPK and NF-kappaB signaling pathway. Upon activation, up-regulates the expression of CD80, CD86, CD69 and MHC II on macrophages, and induces the release of pro-inflammatory cytokines such as TNF, IL1B, IL6, CCL2 and nitric oxide. May play a role in inhibition of proliferation and migration. This chain is Transmembrane protein 106A (Tmem106a), found in Mus musculus (Mouse).